The chain runs to 103 residues: Large ribosomal subunit protein eL14 (103 aa).

This sequence belongs to the eukaryotic ribosomal protein eL14 family.

This Ignicoccus hospitalis (strain KIN4/I / DSM 18386 / JCM 14125) protein is Large ribosomal subunit protein eL14.